Consider the following 115-residue polypeptide: NADH-ubiquinone oxidoreductase chain 3 (115 aa).

A run of 3 helical transmembrane segments spans residues 3–23 (LYTV…VAFW), 55–75 (FFLV…LLPL), and 86–106 (TMMI…AYEW).

This sequence belongs to the complex I subunit 3 family. As to quaternary structure, core subunit of respiratory chain NADH dehydrogenase (Complex I) which is composed of 45 different subunits. Interacts with TMEM186. Interacts with TMEM242.

The protein localises to the mitochondrion inner membrane. The catalysed reaction is a ubiquinone + NADH + 5 H(+)(in) = a ubiquinol + NAD(+) + 4 H(+)(out). In terms of biological role, core subunit of the mitochondrial membrane respiratory chain NADH dehydrogenase (Complex I) which catalyzes electron transfer from NADH through the respiratory chain, using ubiquinone as an electron acceptor. Essential for the catalytic activity of complex I. This chain is NADH-ubiquinone oxidoreductase chain 3, found in Mus musculus (Mouse).